A 188-amino-acid chain; its full sequence is Large ribosomal subunit protein uL5 (188 aa).

This sequence belongs to the universal ribosomal protein uL5 family. Part of the 50S ribosomal subunit; contacts the 5S rRNA and probably tRNA. Forms a bridge to the 30S subunit in the 70S ribosome.

This is one of the proteins that bind and probably mediate the attachment of the 5S RNA into the large ribosomal subunit, where it forms part of the central protuberance. In the 70S ribosome it contacts protein S13 of the 30S subunit (bridge B1b), connecting the 2 subunits; this bridge is implicated in subunit movement. May contact the P site tRNA; the 5S rRNA and some of its associated proteins might help stabilize positioning of ribosome-bound tRNAs. This Pyrococcus horikoshii (strain ATCC 700860 / DSM 12428 / JCM 9974 / NBRC 100139 / OT-3) protein is Large ribosomal subunit protein uL5.